Consider the following 250-residue polypeptide: Probable phosphatase VIBHAR_04983 (250 aa).

Positions 8, 10, 16, 41, 74, 102, 132, 194, and 196 each coordinate Zn(2+).

Belongs to the PHP family. Requires Zn(2+) as cofactor.

The polypeptide is Probable phosphatase VIBHAR_04983 (Vibrio campbellii (strain ATCC BAA-1116)).